Reading from the N-terminus, the 134-residue chain is uncharacterized protein (134 aa).

Belongs to the ycf68 family.

The protein resides in the plastid. It localises to the chloroplast. This is an uncharacterized protein from Saccharum hybrid (Sugarcane).